The primary structure comprises 225 residues: 2-C-methyl-D-erythritol 4-phosphate cytidylyltransferase (225 aa).

This sequence belongs to the IspD/TarI cytidylyltransferase family. IspD subfamily.

It carries out the reaction 2-C-methyl-D-erythritol 4-phosphate + CTP + H(+) = 4-CDP-2-C-methyl-D-erythritol + diphosphate. Its pathway is isoprenoid biosynthesis; isopentenyl diphosphate biosynthesis via DXP pathway; isopentenyl diphosphate from 1-deoxy-D-xylulose 5-phosphate: step 2/6. In terms of biological role, catalyzes the formation of 4-diphosphocytidyl-2-C-methyl-D-erythritol from CTP and 2-C-methyl-D-erythritol 4-phosphate (MEP). The protein is 2-C-methyl-D-erythritol 4-phosphate cytidylyltransferase of Cereibacter sphaeroides (strain ATCC 17029 / ATH 2.4.9) (Rhodobacter sphaeroides).